The sequence spans 323 residues: G patch domain-containing protein 4 (323 aa).

Disordered stretches follow at residues 1 to 32 (MSAS…GLGR), 84 to 110 (GVKV…SNRN), 124 to 185 (PGGE…SAKL), and 197 to 323 (AKYG…NKSE). Basic and acidic residues-rich tracts occupy residues 9–32 (SQGR…GLGR) and 84–94 (GVKVNRTKDDD). Residues 11–57 (GRRFAEQQMHKHGWTEGKGLGRRENGISEAIKVKVKCDHAGVGHNSA) form the G-patch domain. The span at 131 to 141 (KEPSSSESSDS) shows a compositional bias: low complexity. Residues 252–261 (EREEEEEEES) show a composition bias toward acidic residues. Residues 281–291 (SKKKKSKKKHR) are compositionally biased toward basic residues. A compositionally biased stretch (polar residues) spans 294-306 (SASPQEEQVTEST). Basic residues predominate over residues 311–323 (KPKKKKKKKNKSE).

This is G patch domain-containing protein 4 (gpatch4) from Xenopus tropicalis (Western clawed frog).